Here is a 1038-residue protein sequence, read N- to C-terminus: Type I restriction enzyme EcoR124I/EcoR124II endonuclease subunit (1038 aa).

The nuclease domain stretch occupies residues 31 to 249 (QSESDLEREL…LKDFTATCFQ (219 aa)). The segment at 250 to 469 (KHTLLNVLVN…SYVITDAIRD (220 aa)) is motor 1 domain. One can recognise a Helicase ATP-binding domain in the interval 294-439 (KNWSKPESGG…YQFGFTGTPI (146 aa)). Residue 307–314 (HTTGSGKT) coordinates ATP. The DEAH box motif lies at 408-411 (DECH). The interval 470–702 (EKVLKFKVDY…YDATKTFGNI (233 aa)) is motor 2 domain. Residues 720–732 (GDKNTKNVVLEKS) form a motor 2-helicase linker region. The interval 732 to 860 (SYTEYMEGFT…NDIRDWQRRE (129 aa)) is helicase domain. A helicase-CTD linker region spans residues 859–886 (REKEAEKKEKSTTDWDDVVFEVDLLKSQ). The C-terminal domain stretch occupies residues 886 to 1038 (QEINLDYILG…EKFKGVGGKI (153 aa)).

It belongs to the HsdR family. As to quaternary structure, a monomer in solution. The type I restriction/modification system is composed of three polypeptides R, M and S; the restriction enzyme has stoichiometry R(2)M(2)S(1) while the methyltransferase is M(2)S(1). There is an equilibrium between R(2)M(2)S(1) and R(1)M(2)S(1); the latter is methylation and translocation proficient but restriction deficient. (Microbial infection) Holoenenzyme interacts with Escherichia phage T7 protein Ocr; this interaction leads to the inhibition of the restriction activity, but may still allow methylation and translocation.

It catalyses the reaction Endonucleolytic cleavage of DNA to give random double-stranded fragments with terminal 5'-phosphates, ATP is simultaneously hydrolyzed.. The restriction (R) subunit of a type I restriction enzyme that recognizes 5'-GAAN(6)RTCG-3' (for EcoR124I) and 5'-GAAN(7)RTCG-3' (for EcoR124II) and cleaves a random distance away. Subunit R is required for both nuclease and ATPase activities, but not for modification. After locating an unmethylated recognition site, the enzyme complex serves as a molecular motor that translocates DNA in an ATP-dependent manner until a collision occurs that triggers cleavage. The enzyme undergoes major structural changes to bring the motor domains into contact with DNA, allowing DNA translocation. This prevents DNA access to the catalytic domains of both the R and M subunits, preventing both restriction and methylation. The R(1)M(2)S(1) complex translocates an average of 555 bp/second on nicked DNA; the R(2)M(2)S(1) complex translocates at double that speed. The 2 R subunit motors are independent and track along the helical pitch of the DNA, inducing positive supercoiling ahead of themselves. This is Type I restriction enzyme EcoR124I/EcoR124II endonuclease subunit from Escherichia coli.